The chain runs to 98 residues: Small ribosomal subunit protein uS19 (98 aa).

Residues 77 to 98 (TRTYRGHAGGKAEKGGAAPKRK) form a disordered region.

The protein belongs to the universal ribosomal protein uS19 family.

In terms of biological role, protein S19 forms a complex with S13 that binds strongly to the 16S ribosomal RNA. The protein is Small ribosomal subunit protein uS19 of Chlorobium phaeovibrioides (strain DSM 265 / 1930) (Prosthecochloris vibrioformis (strain DSM 265)).